A 205-amino-acid polypeptide reads, in one-letter code: Protein-L-isoaspartate O-methyltransferase (205 aa).

The active site involves Ser56.

This sequence belongs to the methyltransferase superfamily. L-isoaspartyl/D-aspartyl protein methyltransferase family.

It localises to the cytoplasm. The enzyme catalyses [protein]-L-isoaspartate + S-adenosyl-L-methionine = [protein]-L-isoaspartate alpha-methyl ester + S-adenosyl-L-homocysteine. In terms of biological role, catalyzes the methyl esterification of L-isoaspartyl residues in peptides and proteins that result from spontaneous decomposition of normal L-aspartyl and L-asparaginyl residues. It plays a role in the repair and/or degradation of damaged proteins. The chain is Protein-L-isoaspartate O-methyltransferase from Pyrobaculum arsenaticum (strain DSM 13514 / JCM 11321 / PZ6).